A 988-amino-acid chain; its full sequence is DExH-box ATP-dependent RNA helicase DExH9 (988 aa).

The disordered stretch occupies residues 1 to 27; that stretch reads MGSVKRKSVEESSDSAPPQKVQREDDS. The Helicase ATP-binding domain maps to 76 to 232; the sequence is IKCLDNGESV…WVAKVHQQPC (157 aa). An ATP-binding site is contributed by 89-96; that stretch reads AHTSAGKT. Positions 180–183 match the DEVH box motif; that stretch reads DEVH. Residues 307-509 form the Helicase C-terminal domain; that stretch reads DIFKLVKMII…SYNMLLNQLR (203 aa).

The protein belongs to the DExH box helicase family. SKI2 subfamily. In terms of tissue distribution, ubiquitous but preferentially expressed in active tissues.

It localises to the nucleus. Its subcellular location is the nucleolus. It carries out the reaction ATP + H2O = ADP + phosphate + H(+). Functionally, ATP-dependent RNA helicase that associates with the RNA exosome complex. Required for proper rRNA biogenesis and development. Involved in the 3'-processing of the 7S pre-RNA to the mature 5.8S rRNA and also in the removal of rRNA maturation by-products. This Arabidopsis thaliana (Mouse-ear cress) protein is DExH-box ATP-dependent RNA helicase DExH9.